The chain runs to 508 residues: Maturase K (508 aa).

This sequence belongs to the intron maturase 2 family. MatK subfamily.

It is found in the plastid. Its subcellular location is the chloroplast. Usually encoded in the trnK tRNA gene intron. Probably assists in splicing its own and other chloroplast group II introns. This Pelargonium hortorum (Common geranium) protein is Maturase K.